We begin with the raw amino-acid sequence, 557 residues long: Dihydroxy-acid dehydratase (557 aa).

Asp78 is a Mg(2+) binding site. Residue Cys119 participates in [2Fe-2S] cluster binding. The Mg(2+) site is built by Asp120 and Lys121. Lys121 carries the N6-carboxylysine modification. Residue Cys192 participates in [2Fe-2S] cluster binding. A Mg(2+)-binding site is contributed by Glu446. Residue Ser472 is the Proton acceptor of the active site.

It belongs to the IlvD/Edd family. Homodimer. The cofactor is [2Fe-2S] cluster. Requires Mg(2+) as cofactor.

It carries out the reaction (2R)-2,3-dihydroxy-3-methylbutanoate = 3-methyl-2-oxobutanoate + H2O. It catalyses the reaction (2R,3R)-2,3-dihydroxy-3-methylpentanoate = (S)-3-methyl-2-oxopentanoate + H2O. It participates in amino-acid biosynthesis; L-isoleucine biosynthesis; L-isoleucine from 2-oxobutanoate: step 3/4. It functions in the pathway amino-acid biosynthesis; L-valine biosynthesis; L-valine from pyruvate: step 3/4. Functionally, functions in the biosynthesis of branched-chain amino acids. Catalyzes the dehydration of (2R,3R)-2,3-dihydroxy-3-methylpentanoate (2,3-dihydroxy-3-methylvalerate) into 2-oxo-3-methylpentanoate (2-oxo-3-methylvalerate) and of (2R)-2,3-dihydroxy-3-methylbutanoate (2,3-dihydroxyisovalerate) into 2-oxo-3-methylbutanoate (2-oxoisovalerate), the penultimate precursor to L-isoleucine and L-valine, respectively. This chain is Dihydroxy-acid dehydratase, found in Campylobacter curvus (strain 525.92).